Consider the following 287-residue polypeptide: 1-acyl-sn-glycerol-3-phosphate acyltransferase alpha (287 aa).

The N-terminal stretch at 1–26 is a signal peptide; sequence MELWPGAGTLLLLLFLLLLLLLPTLW. The Lumenal portion of the chain corresponds to 27–37; it reads FCSPSAKYFFK. A helical membrane pass occupies residues 38–58; it reads MAFYNGWILFLAVLAIPVCAV. Residues 59–127 lie on the Cytoplasmic side of the membrane; the sequence is RGRNVENMKI…PGHCVPIAKR (69 aa). The HXXXXD motif motif lies at 104–109; sequence HQSSLD. The chain crosses the membrane as a helical span at residues 128–148; that stretch reads ELLWAGSAGLACWLAGVIFID. The Lumenal portion of the chain corresponds to 149-192; it reads RKRTGDAISVMSEVAQTLLTQDVRVWVFPEGTRNHNGSMLPFKR. The EGTR motif motif lies at 178–181; it reads EGTR.

Belongs to the 1-acyl-sn-glycerol-3-phosphate acyltransferase family.

It localises to the endoplasmic reticulum membrane. The catalysed reaction is a 1-acyl-sn-glycero-3-phosphate + an acyl-CoA = a 1,2-diacyl-sn-glycero-3-phosphate + CoA. It carries out the reaction 1-(9Z-octadecenoyl)-sn-glycero-3-phosphate + (9Z)-octadecenoyl-CoA = 1,2-di-(9Z-octadecenoyl)-sn-glycero-3-phosphate + CoA. It catalyses the reaction 1-(9Z-octadecenoyl)-sn-glycero-3-phosphate + hexadecanoyl-CoA = 1-(9Z)-octadecenoyl-2-hexadecanoyl-sn-glycero-3-phosphate + CoA. The enzyme catalyses heptadecanoyl-CoA + 1-(9Z-octadecenoyl)-sn-glycero-3-phosphate = 1-(9Z)-octadecenoyl-2-heptadecanoyl-sn-glycero-3-phosphate + CoA. The catalysed reaction is 1-(9Z-octadecenoyl)-sn-glycero-3-phosphate + octadecanoyl-CoA = 1-(9Z-octadecenoyl)-2-octadecanoyl-sn-glycero-3-phosphate + CoA. It carries out the reaction 1-(9Z-octadecenoyl)-sn-glycero-3-phosphate + (9Z,12Z)-octadecadienoyl-CoA = 1-(9Z)-octadecenoyl-2-(9Z,12Z)-octadecadienoyl-sn-glycero-3-phosphate + CoA. It catalyses the reaction 1-(9Z-octadecenoyl)-sn-glycero-3-phosphate + tetradecanoyl-CoA = 1-(9Z)-octadecenoyl-2-tetradecanoyl-sn-glycero-3-phosphate + CoA. The enzyme catalyses pentadecanoyl-CoA + 1-(9Z-octadecenoyl)-sn-glycero-3-phosphate = 1-(9Z)-octadecenoyl-2-pentadecanoyl-sn-glycero-3-phosphate + CoA. The catalysed reaction is 1-hexadecanoyl-sn-glycero-3-phosphate + (9Z)-octadecenoyl-CoA = 1-hexadecanoyl-2-(9Z-octadecenoyl)-sn-glycero-3-phosphate + CoA. It carries out the reaction 1-(9Z,12Z,15Z)-octadecatrienoyl-sn-glycero-3-phosphate + (9Z)-octadecenoyl-CoA = 1-(9Z,12Z,15Z)-octadecatrienoyl-2-(9Z)-octadecenoyl-sn-glycero-3-phosphate + CoA. It catalyses the reaction 1-(6Z,9Z,12Z-octadecatrienoyl)-sn-glycero-3-phosphate + (9Z)-octadecenoyl-CoA = (6Z,9Z,12Z)-octadecatrienoyl-2-(9Z)-octadecenoyl-sn-glycero-3-phosphate + CoA. The enzyme catalyses 1-eicosanoyl-sn-glycero-3-phosphate + (9Z)-octadecenoyl-CoA = 1-eicosanoyl-2-(9Z)-octadecenoyl-sn-glycero-3-phosphate + CoA. The catalysed reaction is 1-tetradecanoyl-sn-glycerol 3-phosphate + (9Z)-octadecenoyl-CoA = 1-tetradecanoyl-2-(9Z)-octadecenoyl-sn-glycero-3-phosphate + CoA. It carries out the reaction 1-(9Z-octadecenoyl)-sn-glycero-3-phosphate + (5Z,8Z,11Z,14Z)-eicosatetraenoyl-CoA = 1-(9Z)-octadecenoyl-2-(5Z,8Z,11Z,14Z)-eicosatetraenoyl-sn-glycero-3-phosphate + CoA. It catalyses the reaction 1-(9Z-octadecenoyl)-sn-glycero-3-phosphate + dodecanoyl-CoA = 1-(9Z)-octadecenoyl-2-dodecanoyl-sn-glycero-3-phosphate + CoA. The enzyme catalyses (6Z)-octadecenoyl-CoA + 1-(9Z-octadecenoyl)-sn-glycero-3-phosphate = 1-(9Z)-octadecenoyl-2-(6Z)-octadecenoyl-sn-glycero-3-phosphate + CoA. The catalysed reaction is (11Z)-octadecenoyl-CoA + 1-(9Z-octadecenoyl)-sn-glycero-3-phosphate = 1-(9Z)-octadecenoyl-2-(11Z)-octadecenoyl-sn-glycero-3-phosphate + CoA. It carries out the reaction (9Z)-hexadecenoyl-CoA + 1-(9Z-octadecenoyl)-sn-glycero-3-phosphate = 1-(9Z-octadecenoyl)-2-(9Z-hexadecenoyl)-sn-glycero-3-phosphate + CoA. It functions in the pathway phospholipid metabolism; CDP-diacylglycerol biosynthesis; CDP-diacylglycerol from sn-glycerol 3-phosphate: step 2/3. Its function is as follows. Converts 1-acyl-sn-glycerol-3-phosphate (lysophosphatidic acid or LPA) into 1,2-diacyl-sn-glycerol-3-phosphate (phosphatidic acid or PA) by incorporating an acyl moiety at the sn-2 position of the glycerol backbone. This Ovis aries (Sheep) protein is 1-acyl-sn-glycerol-3-phosphate acyltransferase alpha (AGPAT1).